Reading from the N-terminus, the 203-residue chain is Small ribosomal subunit protein uS4 (203 aa).

Residues Arg93–Ala155 form the S4 RNA-binding domain.

The protein belongs to the universal ribosomal protein uS4 family. In terms of assembly, part of the 30S ribosomal subunit. Contacts protein S5. The interaction surface between S4 and S5 is involved in control of translational fidelity.

In terms of biological role, one of the primary rRNA binding proteins, it binds directly to 16S rRNA where it nucleates assembly of the body of the 30S subunit. Functionally, with S5 and S12 plays an important role in translational accuracy. This Lactobacillus acidophilus (strain ATCC 700396 / NCK56 / N2 / NCFM) protein is Small ribosomal subunit protein uS4.